A 113-amino-acid polypeptide reads, in one-letter code: Large ribosomal subunit protein bL19 (113 aa).

It belongs to the bacterial ribosomal protein bL19 family.

This protein is located at the 30S-50S ribosomal subunit interface and may play a role in the structure and function of the aminoacyl-tRNA binding site. This Desulfitobacterium hafniense (strain DSM 10664 / DCB-2) protein is Large ribosomal subunit protein bL19.